The chain runs to 465 residues: Zinc finger CCCH domain-containing protein 58 (465 aa).

Residues 1-26 (MERYGGAGEDESRSDPSHEWSAQGTE) are disordered. 3 C3H1-type zinc fingers span residues 51–79 (RPDEPDCIYYLRTGVCGYGSRCRFNHPRN), 97–125 (RMGQPVCQHFMRTGTCKFGASCKYHHPRQ), and 145–173 (RPGEKECSYFMRTGQCKFGSTCRYHHPVP). Disordered regions lie at residues 173-200 (PPGVQAPSQQQQQQLSAGPTMYPSLQSQ) and 274-302 (LSPSAPAYQSGPSSTGVSNKEQTFPQRPE). Over residues 177-191 (QAPSQQQQQQLSAGP) the composition is skewed to low complexity. The span at 283–298 (SGPSSTGVSNKEQTFP) shows a compositional bias: polar residues. C3H1-type zinc fingers lie at residues 300 to 328 (RPEQPECQYFMRTGDCKFGTSCRFHHPME) and 345 to 373 (RPGAVPCTHFAQHGICKFGPACKFDHSLG). Residues 397–431 (SLGTLAPSSSSDQCTELISSSSIEPITTTTGGSET) show a composition bias toward low complexity. The segment at 397 to 465 (SLGTLAPSSS…SASNEAKTSS (69 aa)) is disordered. Positions 444–453 (SHPEPAETNK) are enriched in basic and acidic residues. Over residues 454 to 465 (GDSASNEAKTSS) the composition is skewed to polar residues.

It localises to the nucleus. In Arabidopsis thaliana (Mouse-ear cress), this protein is Zinc finger CCCH domain-containing protein 58.